The sequence spans 130 residues: uncharacterized protein (130 aa).

A helical transmembrane segment spans residues 15–31 (LYLCPAIIRLSSVCTLA).

The protein resides in the membrane. This is an uncharacterized protein from Saccharomyces cerevisiae (strain ATCC 204508 / S288c) (Baker's yeast).